The sequence spans 389 residues: Probable nitrate transporter NarT (389 aa).

12 consecutive transmembrane segments (helical) span residues 14–34 (TLSL…MPFI), 45–65 (ISII…PFGY), 69–89 (IVGA…PIFF), 97–117 (GMLM…SVGV), 139–159 (GNIG…IIGW), 161–181 (TTVR…FIFG), 211–231 (WYFI…NYLV), 246–266 (GVFI…GDKF), 268–288 (AVKV…ILGI), 294–314 (LFTV…GLIF), 331–351 (IVSM…TYVA), and 353–373 (LTGS…IALF).

This sequence belongs to the major facilitator superfamily. Nitrate/nitrite porter (TC 2.A.1.8) family.

The protein resides in the cell membrane. In terms of biological role, probably required for nitrate uptake under anoxic conditions. Also possibly involved in excretion of nitrite produced by the dissimilatory reduction of nitrate. The sequence is that of Probable nitrate transporter NarT (narT) from Staphylococcus aureus (strain MRSA252).